The sequence spans 350 residues: NAD-dependent protein deacetylase sirtuin-2 (350 aa).

The Nuclear export signal motif lies at 4–14 (LRNLFTQTLGL). S16 bears the Phosphoserine mark. The Deacetylase sirtuin-type domain maps to 20 to 301 (RLLDELTLEG…LALADLLGWK (282 aa)). NAD(+) is bound by residues 48 to 52 (AGIST) and 58 to 60 (DFR). S63 is subject to Phosphoserine. NAD(+) is bound at residue 130–133 (QNID). H150 functions as the Proton acceptor in the catalytic mechanism. Residues C158 and C163 each coordinate Zn(2+). At S170 the chain carries Phosphoserine. C184 and C187 together coordinate Zn(2+). NAD(+)-binding positions include 225 to 226 (TS), 249 to 251 (NKE), and C287. The disordered stretch occupies residues 312-350 (ANIDAQSGSQASNPSATVSPRKSPPPAKEAARTKEKEEH). The segment covering 315-331 (DAQSGSQASNPSATVSP) has biased composition (polar residues). 2 positions are modified to phosphoserine: S330 and S334. Positions 340 to 350 (EAARTKEKEEH) are enriched in basic and acidic residues.

Belongs to the sirtuin family. Class I subfamily. In terms of assembly, interacts with CDC20, FOXO3 and FZR1. Associates with microtubules in primary cortical mature neurons. Homotrimer. Interacts (via both phosphorylated, unphosphorylated, active or inactive forms) with HDAC6; the interaction is necessary for the complex to interact with alpha-tubulin, suggesting that these proteins belong to a large complex that deacetylates the cytoskeleton. Interacts with FOXO1; the interaction is disrupted upon serum-starvation or oxidative stress, leading to increased level of acetylated FOXO1 and induction of autophagy. Interacts with RELA; the interaction occurs in the cytoplasm and is increased in a TNF-alpha-dependent manner. Interacts with HOXA10; the interaction is direct. Interacts with YWHAB and YWHAG; the interactions occur in a AKT-dependent manner and increase SIRT2-dependent TP53 deacetylation. Interacts with MAPK1/ERK2 and MAPK3/ERK1; the interactions increase SIRT2 stability and deacetylation activity. Interacts (phosphorylated form) with KMT5A isoform 2; the interaction is direct, stimulates KMT5A-mediated methyltransferase activity on histone at 'Lys-20' (H4K20me1) and is increased in a H(2)O(2)-induced oxidative stress-dependent manner. Interacts with G6PD; the interaction is enhanced by H(2)O(2) treatment. Interacts with a G1/S-specific cyclin E-CDK2 complex. Interacts with AURKA, CDK5R1 (p35 form) and CDK5 and HIF1A. Interacts with the tRNA ligase SARS1; recruited to the VEGFA promoter via interaction with SARS1. Interacts with BEX4; negatively regulates alpha-tubulin deacetylation by SIRT2. The cofactor is Zn(2+). Phosphorylated at phosphoserine and phosphothreonine. Phosphorylated at Ser-330 by a mitotic kinase CDK1/cyclin B at the G2/M transition; phosphorylation regulates the delay in cell-cycle progression. Phosphorylated at Ser-330 by a mitotic kinase G1/S-specific cyclin E/Cdk2 complex; phosphorylation inactivates SIRT2-mediated alpha-tubulin deacetylation and thereby negatively regulates cell adhesion, cell migration and neurite outgrowth during neuronal differentiation. Phosphorylated by cyclin A/Cdk2 and p35-Cdk5 complexes and to a lesser extent by the cyclin D3/Cdk4 and cyclin B/Cdk1, in vitro. Dephosphorylated at Ser-330 by CDC14A and CDC14B around early anaphase. In terms of processing, acetylated by EP300; acetylation leads both to the decreased of SIRT2-mediated alpha-tubulin deacetylase activity and SIRT2-mediated down-regulation of TP53 transcriptional activity. Post-translationally, ubiquitinated. In terms of tissue distribution, expressed in the cerebellum, cerebral cortex and cervival spinal cord. Expressed in Purkinje cells, oligodendrocytes and Schwann cells (at protein level). Expressed in the central nervous system (CNS).

It is found in the nucleus. It localises to the cytoplasm. Its subcellular location is the perinuclear region. The protein resides in the cytoskeleton. The protein localises to the microtubule organizing center. It is found in the centrosome. It localises to the centriole. Its subcellular location is the spindle. The protein resides in the midbody. The protein localises to the chromosome. It is found in the perikaryon. It localises to the cell projection. Its subcellular location is the growth cone. The protein resides in the myelin membrane. The enzyme catalyses N(6)-acetyl-L-lysyl-[protein] + NAD(+) + H2O = 2''-O-acetyl-ADP-D-ribose + nicotinamide + L-lysyl-[protein]. The catalysed reaction is N(6)-tetradecanoyl-L-lysyl-[protein] + NAD(+) + H2O = 2''-O-tetradecanoyl-ADP-D-ribose + nicotinamide + L-lysyl-[protein]. It carries out the reaction N(6)-hexadecanoyl-L-lysyl-[protein] + NAD(+) + H2O = 2''-O-hexadecanoyl-ADP-D-ribose + nicotinamide + L-lysyl-[protein]. With respect to regulation, inhibited by Sirtinol, A3 and M15 small molecules. Inhibited by nicotinamide. Inhibited by a macrocyclic peptide inhibitor S2iL5. Inhibited by EP300-induced acetylation. Its function is as follows. NAD-dependent protein deacetylase, which deacetylates internal lysines on histone and alpha-tubulin as well as many other proteins such as key transcription factors. Participates in the modulation of multiple and diverse biological processes such as cell cycle control, genomic integrity, microtubule dynamics, cell differentiation, metabolic networks, and autophagy. Plays a major role in the control of cell cycle progression and genomic stability. Functions in the antephase checkpoint preventing precocious mitotic entry in response to microtubule stress agents, and hence allowing proper inheritance of chromosomes. Positively regulates the anaphase promoting complex/cyclosome (APC/C) ubiquitin ligase complex activity by deacetylating CDC20 and FZR1, then allowing progression through mitosis. Associates both with chromatin at transcriptional start sites (TSSs) and enhancers of active genes. Plays a role in cell cycle and chromatin compaction through epigenetic modulation of the regulation of histone H4 'Lys-20' methylation (H4K20me1) during early mitosis. Specifically deacetylates histone H4 at 'Lys-16' (H4K16ac) between the G2/M transition and metaphase enabling H4K20me1 deposition by KMT5A leading to ulterior levels of H4K20me2 and H4K20me3 deposition throughout cell cycle, and mitotic S-phase progression. Deacetylates KMT5A modulating KMT5A chromatin localization during the mitotic stress response. Also deacetylates histone H3 at 'Lys-57' (H3K56ac) during the mitotic G2/M transition. During oocyte meiosis progression, may deacetylate histone H4 at 'Lys-16' (H4K16ac) and alpha-tubulin, regulating spindle assembly and chromosome alignment by influencing microtubule dynamics and kinetochore function. Deacetylates histone H4 at 'Lys-16' (H4K16ac) at the VEGFA promoter and thereby contributes to regulate expression of VEGFA, a key regulator of angiogenesis. Deacetylates alpha-tubulin at 'Lys-40' and hence controls neuronal motility, oligodendroglial cell arbor projection processes and proliferation of non-neuronal cells. Phosphorylation at Ser-368 by a G1/S-specific cyclin E-CDK2 complex inactivates SIRT2-mediated alpha-tubulin deacetylation, negatively regulating cell adhesion, cell migration and neurite outgrowth during neuronal differentiation. Deacetylates PARD3 and participates in the regulation of Schwann cell peripheral myelination formation during early postnatal development and during postinjury remyelination. Involved in several cellular metabolic pathways. Plays a role in the regulation of blood glucose homeostasis by deacetylating and stabilizing phosphoenolpyruvate carboxykinase PCK1 activity in response to low nutrient availability. Acts as a key regulator in the pentose phosphate pathway (PPP) by deacetylating and activating the glucose-6-phosphate G6PD enzyme, and therefore, stimulates the production of cytosolic NADPH to counteract oxidative damage. Maintains energy homeostasis in response to nutrient deprivation as well as energy expenditure by inhibiting adipogenesis and promoting lipolysis. Attenuates adipocyte differentiation by deacetylating and promoting FOXO1 interaction to PPARG and subsequent repression of PPARG-dependent transcriptional activity. Plays a role in the regulation of lysosome-mediated degradation of protein aggregates by autophagy in neuronal cells. Deacetylates FOXO1 in response to oxidative stress or serum deprivation, thereby negatively regulating FOXO1-mediated autophagy. Deacetylates a broad range of transcription factors and co-regulators regulating target gene expression. Deacetylates transcriptional factor FOXO3 stimulating the ubiquitin ligase SCF(SKP2)-mediated FOXO3 ubiquitination and degradation. Deacetylates HIF1A and therefore promotes HIF1A degradation and inhibition of HIF1A transcriptional activity in tumor cells in response to hypoxia. Deacetylates RELA in the cytoplasm inhibiting NF-kappaB-dependent transcription activation upon TNF-alpha stimulation. Inhibits transcriptional activation by deacetylating p53/TP53 and EP300. Also deacetylates EIF5A. Functions as a negative regulator on oxidative stress-tolerance in response to anoxia-reoxygenation conditions. Plays a role as tumor suppressor. In addition to protein deacetylase activity, also has activity toward long-chain fatty acyl groups and mediates protein-lysine demyristoylation and depalmitoylation of target proteins, such as ARF6 and KRAS, thereby regulating their association with membranes. In Rattus norvegicus (Rat), this protein is NAD-dependent protein deacetylase sirtuin-2 (Sirt2).